The chain runs to 126 residues: Large ribosomal subunit protein uL22 (126 aa).

Belongs to the universal ribosomal protein uL22 family. In terms of assembly, part of the 50S ribosomal subunit.

Functionally, this protein binds specifically to 23S rRNA; its binding is stimulated by other ribosomal proteins, e.g. L4, L17, and L20. It is important during the early stages of 50S assembly. It makes multiple contacts with different domains of the 23S rRNA in the assembled 50S subunit and ribosome. Its function is as follows. The globular domain of the protein is located near the polypeptide exit tunnel on the outside of the subunit, while an extended beta-hairpin is found that lines the wall of the exit tunnel in the center of the 70S ribosome. The protein is Large ribosomal subunit protein uL22 of Phenylobacterium zucineum (strain HLK1).